A 290-amino-acid chain; its full sequence is Protoheme IX farnesyltransferase 1 (290 aa).

The next 8 membrane-spanning stretches (helical) occupy residues 8–28 (ITKP…FFLA), 36–56 (FLLL…GCVV), 85–105 (AAFV…FQVV), 108–128 (LSAV…TMWY), 131–151 (NSVY…LVGY), 152–172 (LAVT…FCLW), 211–231 (AYVV…EAGY), and 269–289 (LLVV…LPFI).

This sequence belongs to the UbiA prenyltransferase family. Protoheme IX farnesyltransferase subfamily.

Its subcellular location is the cell inner membrane. The enzyme catalyses heme b + (2E,6E)-farnesyl diphosphate + H2O = Fe(II)-heme o + diphosphate. It functions in the pathway porphyrin-containing compound metabolism; heme O biosynthesis; heme O from protoheme: step 1/1. Functionally, converts heme B (protoheme IX) to heme O by substitution of the vinyl group on carbon 2 of heme B porphyrin ring with a hydroxyethyl farnesyl side group. In Vibrio campbellii (strain ATCC BAA-1116), this protein is Protoheme IX farnesyltransferase 1.